Reading from the N-terminus, the 309-residue chain is Short-chain dehydrogenase/reductase ARMGADRAFT_1048226 (309 aa).

Residues Lys-64, Asp-86, Asn-113, and Lys-145 each contribute to the NADP(+) site. Ser-167 serves as the catalytic Proton donor. NADP(+) contacts are provided by Tyr-196 and Lys-200. The active-site Proton acceptor is the Tyr-196. The Lowers pKa of active site Tyr role is filled by Lys-200.

Belongs to the short-chain dehydrogenases/reductases (SDR) family.

It functions in the pathway secondary metabolite biosynthesis. Functionally, short-chain dehydrogenase/reductase, part of the gene cluster that mediates the biosynthesis of melleolides, a range of antifungal and phytotoxic polyketide derivatives composed of an orsellinic acid (OA) moiety esterified to various sesquiterpene alcohols. The first step in melleolides biosynthesis is performed by the delta(6)-protoilludene synthase PRO1 which catalyzes the cyclization of farnesyl diphosphate to protoilludene. The orsellinic acid synthase armB produces OA by condensing acetyl-CoA with 3 malonyl-CoA units in a three-round chain elongation reaction folowed by a C2-C7 ring closure. ArmB further catalyzes the trans-esterification of OA to the various sesquiterpene alcohols resulting from the hydroxylation of protoilludene. The melleolides cluster also includes 5 cytochrome P450 monooxygenases, 4 NAD(+)-dependent oxidoreductases, one flavin-dependent oxidoreductase, and one O-methyltransferase. The cytochrome P450 monooxygenases may be involved in protoilludene hydroxylation to elaborate melleolides with multiple alcohol groups, such as melleolide D, which carries alcohol functionalities at C-4, C-5, C-10, and C-13. The role of the NAD(+)-dependent enzymes remains unknown. Numerous melleolides, including arnamial, show 5'-O-methylation of the aromatic moiety which may be catalyzed by the methyltransferase encoded in the cluster. The flavin-dependent oxidoreductase might represent the dehydrogenase yielding the aldehyde in position 1 of arnamial and other melleolides. Finally, several halogenase localized outside of the cluster, are able to catalyze the transfer of a single chlorine atom to the melleolide backbone, resulting in a 6'-chloromelleolide product. The sequence is that of Short-chain dehydrogenase/reductase ARMGADRAFT_1048226 from Armillaria gallica (Bulbous honey fungus).